A 347-amino-acid chain; its full sequence is Heat-inducible transcription repressor HrcA (347 aa).

It belongs to the HrcA family.

Negative regulator of class I heat shock genes (grpE-dnaK-dnaJ and groELS operons). Prevents heat-shock induction of these operons. This chain is Heat-inducible transcription repressor HrcA, found in Lactobacillus delbrueckii subsp. bulgaricus (strain ATCC BAA-365 / Lb-18).